A 329-amino-acid chain; its full sequence is tRNA uridine(34) hydroxylase (329 aa).

The Rhodanese domain occupies Ser123 to Ser217. The Cysteine persulfide intermediate role is filled by Cys177. A disordered region spans residues Arg285–Lys329. Basic and acidic residues predominate over residues Gly296–Arg323.

The protein belongs to the TrhO family.

The catalysed reaction is uridine(34) in tRNA + AH2 + O2 = 5-hydroxyuridine(34) in tRNA + A + H2O. In terms of biological role, catalyzes oxygen-dependent 5-hydroxyuridine (ho5U) modification at position 34 in tRNAs. This Vibrio atlanticus (strain LGP32) (Vibrio splendidus (strain Mel32)) protein is tRNA uridine(34) hydroxylase.